The following is a 427-amino-acid chain: UPF0229 protein YeaH (427 aa).

Residues 79 to 90 (NDHFVQNDRIER) are compositionally biased toward basic and acidic residues. Residues 79-110 (NDHFVQNDRIERPQGGGGGSGSGQGQASQDGE) form a disordered region. Over residues 92–102 (QGGGGGSGSGQ) the composition is skewed to gly residues.

The protein belongs to the UPF0229 family.

The sequence is that of UPF0229 protein YeaH from Escherichia coli O139:H28 (strain E24377A / ETEC).